A 361-amino-acid polypeptide reads, in one-letter code: MSDNAAFKFGSFDYICEHAALVVCPMLGDQQGMAPTCYSRNVQLGSQIIFQPATCILHIAALVMATIMLLHVRSKYTAVGRKEIVLFFYMYIWVELFAIFLDSAIIPTANKVYPWFAAIYAGSVGALYWCLLLNGFVGFQFHEDGTPMSLWFLRISSLVVGAVCFGIPVATFKGTSSSMSPTNTVGLFITYLVFPCVCVLIYFISQMLLVVRTLDDRWVIGDLLFMAGFYIAGVLLLVTFSVTICDAVKHYVDGVFFSTLAFLFAVMMVYKYWDSITKEDLEFSVGSKQAVWDVKDPLLATGMEYYEDDAQSAYRGAGGSLVGGYNGNQYYGNQPGYAQSAYGQQGYGQYGAGGGYGQGHY.

7 consecutive transmembrane segments (helical) span residues 48–68 (IIFQPATCILHIAALVMATIM), 86–106 (LFFYMYIWVELFAIFLDSAII), 119–139 (IYAGSVGALYWCLLLNGFVGF), 150–170 (LWFLRISSLVVGAVCFGIPVA), 184–204 (TVGLFITYLVFPCVCVLIYFI), 218–238 (WVIGDLLFMAGFYIAGVLLLV), and 250–270 (HYVDGVFFSTLAFLFAVMMVY).

Belongs to the CHS7 family. In terms of assembly, interacts with CHS3.

The protein resides in the endoplasmic reticulum membrane. Its function is as follows. Chaperone required for the export of the chitin synthase CHS3 from the endoplasmic reticulum. The protein is Chitin synthase export chaperone (CHS7) of Cryptococcus neoformans var. neoformans serotype D (strain JEC21 / ATCC MYA-565) (Filobasidiella neoformans).